Here is a 35-residue protein sequence, read N- to C-terminus: Natriuretic peptide TNPa (35 aa).

An intrachain disulfide couples C9 to C25.

As to expression, expressed by the venom gland.

The protein localises to the secreted. Snake venom natriuretic peptide that exhibits vasoactive and probable hypotensive activity. Is only weakly active on natriuretic peptide receptor-C (NPR3). Stimulates cGMP production through the natriuretic peptide receptor 1 (NPR1) with moderate potencies for the rat NPR1 (EC(50)=2020 nM), and very weak potencies over human NPR1 (15% activation at 10 uM). In vivo, does not impact systolic and diastolic blood pressure, as well as heart rate, when intravenously injected in conscious rabbits. Does not affect the bradycardia due to cardiac afferent stimulation (Bezold-Jarisch reflex). This Oxyuranus microlepidotus (Inland taipan) protein is Natriuretic peptide TNPa.